The chain runs to 170 residues: Probable calcium-binding protein CML29 (170 aa).

3 consecutive EF-hand domains span residues 27–62, 63–98, and 138–170; these read SYISSLVEAFQAFDSDNDGLVTAPELRGLLASLGLD, KPEHEVRDMLARADADRDGKLSVEELLDVMNAGQLG, and ASVEDCMEIIACMDGDGDGAISVEEFRLMAQLL. 13 residues coordinate Ca(2+): D40, D42, D44, E51, D76, D78, D80, K82, E87, D151, D153, D155, and E162.

In terms of biological role, potential calcium sensor. The polypeptide is Probable calcium-binding protein CML29 (CML29) (Oryza sativa subsp. japonica (Rice)).